The following is a 261-amino-acid chain: Type III pantothenate kinase (261 aa).

6 to 13 (DAGNTNVV) is an ATP binding site. 108-111 (GADR) is a binding site for substrate. D110 serves as the catalytic Proton acceptor. D130 provides a ligand contact to K(+). T133 provides a ligand contact to ATP. T185 serves as a coordination point for substrate.

Belongs to the type III pantothenate kinase family. In terms of assembly, homodimer. The cofactor is NH4(+). K(+) serves as cofactor.

It is found in the cytoplasm. The enzyme catalyses (R)-pantothenate + ATP = (R)-4'-phosphopantothenate + ADP + H(+). It functions in the pathway cofactor biosynthesis; coenzyme A biosynthesis; CoA from (R)-pantothenate: step 1/5. Its function is as follows. Catalyzes the phosphorylation of pantothenate (Pan), the first step in CoA biosynthesis. The protein is Type III pantothenate kinase of Rhodospirillum centenum (strain ATCC 51521 / SW).